We begin with the raw amino-acid sequence, 547 residues long: Chaperonin GroEL (547 aa).

Residues 30-33 (TLGP), K51, 87-91 (DGTTT), G415, 479-481 (NAA), and D495 contribute to the ATP site. Positions 526 to 547 (KEEKSDLSVPPQGGMGGMGGMM) are disordered. Residues 538 to 547 (GGMGGMGGMM) are compositionally biased toward gly residues.

It belongs to the chaperonin (HSP60) family. As to quaternary structure, forms a cylinder of 14 subunits composed of two heptameric rings stacked back-to-back. Interacts with the co-chaperonin GroES.

Its subcellular location is the cytoplasm. The enzyme catalyses ATP + H2O + a folded polypeptide = ADP + phosphate + an unfolded polypeptide.. In terms of biological role, together with its co-chaperonin GroES, plays an essential role in assisting protein folding. The GroEL-GroES system forms a nano-cage that allows encapsulation of the non-native substrate proteins and provides a physical environment optimized to promote and accelerate protein folding. The chain is Chaperonin GroEL from Buchnera aphidicola subsp. Tetraneura caerulescens.